Consider the following 324-residue polypeptide: Aprataxin (324 aa).

The region spanning 23 to 72 is the FHA-like domain; it reads SVTLGRGPDTKIKDKKCSREQVELRADCNRGFVTVKQLGVNPTLVDDVVV. A disordered region spans residues 100 to 160; it reads TEDTSRSKPS…QGLKASMQDP (61 aa). Positions 111–125 are enriched in polar residues; it reads RAQQIQSPTKTTADV. In terms of domain architecture, HIT spans 150 to 255; it reads SQGLKASMQD…ISQDFDSPCL (106 aa). Interaction with DNA substrate stretches follow at residues 175 to 179 and 237 to 238; these read DKYPK and SM. The Histidine triad motif motif lies at 240–244; sequence HVHLH. The active-site Tele-AMP-histidine intermediate is His-242. The C2H2-type zinc finger occupies 299-321; that stretch reads LRCHVCGKEQTTIPKLKDHLKTH.

It localises to the nucleus. It is found in the nucleoplasm. The protein resides in the nucleolus. The catalysed reaction is a 5'-end adenosine-5'-diphospho-5'-2'-deoxyribonucleoside-DNA + H2O = a 5'-end 5'-phospho-2'-deoxyribonucleoside-DNA + AMP + 2 H(+). The enzyme catalyses a 5'-end adenosine-5'-diphospho-5'-ribonucleoside-2'-deoxyribonucleotide-DNA + H2O = a 5'-end 5'-phospho-ribonucleoside-2'-deoxyribonucleotide-DNA + AMP + 2 H(+). It carries out the reaction a 3'-end 2'-deoxyribonucleotide-3'-diphospho-5'-guanosine-DNA + H2O = a 3'-end 2'-deoxyribonucleotide 3'-phosphate-DNA + GMP + 2 H(+). Functionally, DNA-binding protein involved in single-strand DNA break repair, double-strand DNA break repair and base excision repair. Resolves abortive DNA ligation intermediates formed either at base excision sites, or when DNA ligases attempt to repair non-ligatable breaks induced by reactive oxygen species. Catalyzes the release of adenylate groups covalently linked to 5'-phosphate termini, resulting in the production of 5'-phosphate termini that can be efficiently rejoined. Also able to hydrolyze adenosine 5'-monophosphoramidate (AMP-NH(2)) and diadenosine tetraphosphate (AppppA), but with lower catalytic activity. Likewise, catalyzes the release of 3'-linked guanosine (DNAppG) and inosine (DNAppI) from DNA, but has higher specific activity with 5'-linked adenosine (AppDNA). This Danio rerio (Zebrafish) protein is Aprataxin (aptx).